The chain runs to 240 residues: Small ribosomal subunit protein uS3 (240 aa).

The region spanning I39–R107 is the KH type-2 domain. 2 stretches are compositionally biased toward basic and acidic residues: residues P212 to E221 and P231 to R240. Residues P212–R240 are disordered.

This sequence belongs to the universal ribosomal protein uS3 family. In terms of assembly, part of the 30S ribosomal subunit. Forms a tight complex with proteins S10 and S14.

Functionally, binds the lower part of the 30S subunit head. Binds mRNA in the 70S ribosome, positioning it for translation. The chain is Small ribosomal subunit protein uS3 from Paracoccus denitrificans (strain Pd 1222).